Reading from the N-terminus, the 656-residue chain is 1-deoxy-D-xylulose-5-phosphate synthase 1 (656 aa).

Thiamine diphosphate contacts are provided by residues H73 and 113–115 (SHA). A Mg(2+)-binding site is contributed by D144. Thiamine diphosphate contacts are provided by residues 145 to 146 (GA), N174, Y285, and E367. Position 174 (N174) interacts with Mg(2+). Residues 625–656 (AGDRAGGPAVEQPGDGRMSGDGRIVMPAQGEN) form a disordered region.

The protein belongs to the transketolase family. DXPS subfamily. In terms of assembly, homodimer. Mg(2+) serves as cofactor. The cofactor is thiamine diphosphate.

It carries out the reaction D-glyceraldehyde 3-phosphate + pyruvate + H(+) = 1-deoxy-D-xylulose 5-phosphate + CO2. Its pathway is metabolic intermediate biosynthesis; 1-deoxy-D-xylulose 5-phosphate biosynthesis; 1-deoxy-D-xylulose 5-phosphate from D-glyceraldehyde 3-phosphate and pyruvate: step 1/1. In terms of biological role, catalyzes the acyloin condensation reaction between C atoms 2 and 3 of pyruvate and glyceraldehyde 3-phosphate to yield 1-deoxy-D-xylulose-5-phosphate (DXP). In Streptomyces coelicolor (strain ATCC BAA-471 / A3(2) / M145), this protein is 1-deoxy-D-xylulose-5-phosphate synthase 1.